A 491-amino-acid chain; its full sequence is 3-octaprenyl-4-hydroxybenzoate carboxy-lyase (491 aa).

N172 contributes to the Mn(2+) binding site. Prenylated FMN is bound by residues 175–177 (IYR), 189–191 (RWL), and 194–195 (RG). E238 provides a ligand contact to Mn(2+). The Proton donor role is filled by D287.

This sequence belongs to the UbiD family. Homohexamer. Requires prenylated FMN as cofactor. Mn(2+) serves as cofactor.

The protein localises to the cell membrane. It catalyses the reaction a 4-hydroxy-3-(all-trans-polyprenyl)benzoate + H(+) = a 2-(all-trans-polyprenyl)phenol + CO2. It functions in the pathway cofactor biosynthesis; ubiquinone biosynthesis. Catalyzes the decarboxylation of 3-octaprenyl-4-hydroxy benzoate to 2-octaprenylphenol, an intermediate step in ubiquinone biosynthesis. In Alcanivorax borkumensis (strain ATCC 700651 / DSM 11573 / NCIMB 13689 / SK2), this protein is 3-octaprenyl-4-hydroxybenzoate carboxy-lyase.